We begin with the raw amino-acid sequence, 560 residues long: Trafficking protein particle complex II-specific subunit 65 (560 aa).

The segment at 164 to 193 (SSKNTNNHLEKNNRATHRVSSKNSEVHEAD) is disordered. Residues Ser393 and Ser398 each carry the phosphoserine modification.

Part of the multisubunit TRAPP (transport protein particle) II complex composed of BET3, BET5, TRS20, TRS23, TRS31, TRS33, TRS65, TRS120 and TRS130. Interacts directly with TRS120 and TRS130.

It localises to the cytoplasm. The protein resides in the golgi apparatus. It is found in the cis-Golgi network. Its pathway is glycan metabolism; beta-glucan biosynthesis. In terms of biological role, specific subunit of the TRAPP II complex, a highly conserved vesicle tethering complex that functions in the late Golgi as a guanine nucleotide exchanger (GEF) for the Golgi YPT1 GTPase. TRS65 plays a role in the YPT GEF activity of TRAPP II in concert with the two other TRAPP II-specific subunits TRS120 and TRS130. Involved in cell wall (1--&gt;6)-beta-glucan synthesis. The protein is Trafficking protein particle complex II-specific subunit 65 (TRS65) of Saccharomyces cerevisiae (strain ATCC 204508 / S288c) (Baker's yeast).